The following is a 585-amino-acid chain: Membrane protein insertase YidC (585 aa).

The next 6 membrane-spanning stretches (helical) occupy residues 5 to 25 (SVTG…FMSP), 338 to 358 (FGWD…AFTW), 362 to 382 (FVSN…LVTY), 432 to 452 (LGGC…FYVF), 482 to 502 (IPMY…TVFL), and 518 to 538 (IMLY…PSGL).

Belongs to the OXA1/ALB3/YidC family. Type 1 subfamily. Interacts with the Sec translocase complex via SecD. Specifically interacts with transmembrane segments of nascent integral membrane proteins during membrane integration.

The protein resides in the cell inner membrane. Required for the insertion and/or proper folding and/or complex formation of integral membrane proteins into the membrane. Involved in integration of membrane proteins that insert both dependently and independently of the Sec translocase complex, as well as at least some lipoproteins. Aids folding of multispanning membrane proteins. This chain is Membrane protein insertase YidC, found in Chlorobium luteolum (strain DSM 273 / BCRC 81028 / 2530) (Pelodictyon luteolum).